The chain runs to 211 residues: Thiamine-phosphate synthase (211 aa).

4-amino-2-methyl-5-(diphosphooxymethyl)pyrimidine is bound by residues 37–41 and N69; that span reads QLRIK. 2 residues coordinate Mg(2+): D70 and D89. A 4-amino-2-methyl-5-(diphosphooxymethyl)pyrimidine-binding site is contributed by S108. Residue 134 to 136 coordinates 2-[(2R,5Z)-2-carboxy-4-methylthiazol-5(2H)-ylidene]ethyl phosphate; the sequence is TQT. K137 is a 4-amino-2-methyl-5-(diphosphooxymethyl)pyrimidine binding site. 2-[(2R,5Z)-2-carboxy-4-methylthiazol-5(2H)-ylidene]ethyl phosphate is bound by residues G166 and 186–187; that span reads VS.

It belongs to the thiamine-phosphate synthase family. It depends on Mg(2+) as a cofactor.

It catalyses the reaction 2-[(2R,5Z)-2-carboxy-4-methylthiazol-5(2H)-ylidene]ethyl phosphate + 4-amino-2-methyl-5-(diphosphooxymethyl)pyrimidine + 2 H(+) = thiamine phosphate + CO2 + diphosphate. The enzyme catalyses 2-(2-carboxy-4-methylthiazol-5-yl)ethyl phosphate + 4-amino-2-methyl-5-(diphosphooxymethyl)pyrimidine + 2 H(+) = thiamine phosphate + CO2 + diphosphate. It carries out the reaction 4-methyl-5-(2-phosphooxyethyl)-thiazole + 4-amino-2-methyl-5-(diphosphooxymethyl)pyrimidine + H(+) = thiamine phosphate + diphosphate. Its pathway is cofactor biosynthesis; thiamine diphosphate biosynthesis; thiamine phosphate from 4-amino-2-methyl-5-diphosphomethylpyrimidine and 4-methyl-5-(2-phosphoethyl)-thiazole: step 1/1. Functionally, condenses 4-methyl-5-(beta-hydroxyethyl)thiazole monophosphate (THZ-P) and 2-methyl-4-amino-5-hydroxymethyl pyrimidine pyrophosphate (HMP-PP) to form thiamine monophosphate (TMP). The polypeptide is Thiamine-phosphate synthase (Escherichia coli (strain SE11)).